A 128-amino-acid polypeptide reads, in one-letter code: Disintegrin ocellatusin (128 aa).

An N-terminal signal peptide occupies residues 1–20 (MIPVLLVTICLAVFPFQGSS). A propeptide spanning residues 21–65 (IILESGNINDYEIVYPKKVAVLPTGAMNSAHPCYDPVTCQPKEKE) is cleaved from the precursor. A Disintegrin domain is found at 26 to 112 (GNINDYEIVY…DCPRNPYKGE (87 aa)). 5 cysteine pairs are disulfide-bonded: C53–C59, C67–C76, C72–C97, C73–C102, and C85–C104. The short motif at 89 to 91 (RGD) is the Cell attachment site element. The propeptide occupies 116 to 128 (MEWPAPAKGSVLM).

As to quaternary structure, monomer. As to expression, expressed by the venom gland.

Its subcellular location is the secreted. Functionally, the disintegrin ocellatusin-10c1 is a poor inhibitor of platelet aggregation. The disintegrin inhibits the adhesion of cells expressing the RGD-dependent integrin alpha-5/beta-1 (ITGA5/ITGB1) to immobilized fibronectin. Inhibition on alpha-2b/beta-3 (ITGA2B/ITGB3) is low, and there is no inhibition on alpha-1/beta-1 (ITGA1/ITGB1), alpha-2/beta-1 (ITGA2/ITGB1) and alpha-6/beta-1 (ITGA6/ITGB1). Its function is as follows. The short monomeric disintegrin ocellatusin inhibits ADP-induced platelet aggregation (IC(50)=168 nM). Inhibits alpha-5/beta-1 (ITGA5/ITGB1) integrin and induces the expression of a ligand-induced binding site epitope on beta-1 integrin subunit. Has a direct chemotactic stimulus on human neutrophils in vitro. The chain is Disintegrin ocellatusin from Echis ocellatus (Ocellated saw-scaled viper).